A 437-amino-acid polypeptide reads, in one-letter code: Elongation factor 1-gamma (437 aa).

Position 2 is an N-acetylalanine (A2). The GST N-terminal domain maps to 2 to 87 (AAGTLYTYPE…YVSNEELRGS (86 aa)). The GST C-terminal domain maps to 88–216 (TPEAAAQVVQ…VKLCEKMAQF (129 aa)). K147 and K212 each carry N6-acetyllysine. Over residues 221-254 (FAESQPKKDTPRKEKGSREEKQKPQAERKEEKKA) the composition is skewed to basic and acidic residues. A disordered region spans residues 221-268 (FAESQPKKDTPRKEKGSREEKQKPQAERKEEKKAAAPAPEEEMDECEQ). A Glycyl lysine isopeptide (Lys-Gly) (interchain with G-Cter in SUMO1) cross-link involves residue K253. Positions 276 to 437 (AKDPFAHLPK…KAFNQGKIFK (162 aa)) constitute an EF-1-gamma C-terminal domain. A Glycyl lysine isopeptide (Lys-Gly) (interchain with G-Cter in SUMO2) cross-link involves residue K285. K401 is modified (N6-acetyllysine). The residue at position 434 (K434) is an N6-acetyllysine; alternate. At K434 the chain carries N6-malonyllysine; alternate.

EF-1 is composed of four subunits: alpha, beta, delta, and gamma.

In terms of biological role, probably plays a role in anchoring the complex to other cellular components. The polypeptide is Elongation factor 1-gamma (EEF1G) (Equus caballus (Horse)).